Here is a 166-residue protein sequence, read N- to C-terminus: NADPH-dependent 7-cyano-7-deazaguanine reductase (166 aa).

Residue C57 is the Thioimide intermediate of the active site. The Proton donor role is filled by D64. Substrate is bound by residues 79–81 (VES) and 98–99 (HE).

Belongs to the GTP cyclohydrolase I family. QueF type 1 subfamily.

It is found in the cytoplasm. The catalysed reaction is 7-aminomethyl-7-carbaguanine + 2 NADP(+) = 7-cyano-7-deazaguanine + 2 NADPH + 3 H(+). The protein operates within tRNA modification; tRNA-queuosine biosynthesis. Catalyzes the NADPH-dependent reduction of 7-cyano-7-deazaguanine (preQ0) to 7-aminomethyl-7-deazaguanine (preQ1). In Staphylococcus haemolyticus (strain JCSC1435), this protein is NADPH-dependent 7-cyano-7-deazaguanine reductase.